The sequence spans 123 residues: MVIFSYRTRIIYIKKIKNKRDTRAKRYVIFDIISEDNFEIREIEEAVRNSVKELGGKIWLDLSNPKVIMIYNNRGIISTNRIGYKIIIASLPLIKKIKNKEVLLVPRRTTGSLKRAKRLIGIE.

This sequence belongs to the eukaryotic/archaeal RNase P protein component 2 family. In terms of assembly, consists of a catalytic RNA component and at least 4-5 protein subunits.

The protein resides in the cytoplasm. It catalyses the reaction Endonucleolytic cleavage of RNA, removing 5'-extranucleotides from tRNA precursor.. In terms of biological role, part of ribonuclease P, a protein complex that generates mature tRNA molecules by cleaving their 5'-ends. The polypeptide is Ribonuclease P protein component 2 (Sulfurisphaera tokodaii (strain DSM 16993 / JCM 10545 / NBRC 100140 / 7) (Sulfolobus tokodaii)).